We begin with the raw amino-acid sequence, 314 residues long: Serine/threonine-protein phosphatase PP-Y (314 aa).

The Mn(2+) site is built by Asp-60, His-62, Asp-88, and Asn-120. His-121 serves as the catalytic Proton donor. Residues His-169 and His-244 each coordinate Mn(2+).

The protein belongs to the PPP phosphatase family. PP-Y subfamily. Requires Mn(2+) as cofactor.

It catalyses the reaction O-phospho-L-seryl-[protein] + H2O = L-seryl-[protein] + phosphate. The catalysed reaction is O-phospho-L-threonyl-[protein] + H2O = L-threonyl-[protein] + phosphate. The polypeptide is Serine/threonine-protein phosphatase PP-Y (PpY-55A) (Drosophila melanogaster (Fruit fly)).